The chain runs to 234 residues: Urease accessory protein UreF (234 aa).

It belongs to the UreF family. As to quaternary structure, ureD, UreF and UreG form a complex that acts as a GTP-hydrolysis-dependent molecular chaperone, activating the urease apoprotein by helping to assemble the nickel containing metallocenter of UreC. The UreE protein probably delivers the nickel.

The protein resides in the cytoplasm. Functionally, required for maturation of urease via the functional incorporation of the urease nickel metallocenter. This is Urease accessory protein UreF from Azoarcus sp. (strain BH72).